Reading from the N-terminus, the 126-residue chain is MQTTTQVKTPIVGKHVYGELYGVDEALLRDEEKLRRIVIEAAHIAKMHLVEVNSWRFKGGDKEGVSVIALVLESHIAIHTWPVYNYATVDVYTCGEHSDPMAAFRYIVSQLAPKRFTVNYSDRSYK.

The Schiff-base intermediate with substrate; via pyruvic acid role is filled by Ser74. Ser74 is subject to Pyruvic acid (Ser); by autocatalysis. The Proton acceptor; for processing activity role is filled by His79. Catalysis depends on Cys94, which acts as the Proton donor; for catalytic activity.

Belongs to the prokaryotic AdoMetDC family. Type 1 subfamily. As to quaternary structure, heterooctamer of four alpha and four beta chains arranged as a tetramer of alpha/beta heterodimers. It depends on pyruvate as a cofactor. Post-translationally, is synthesized initially as an inactive proenzyme. Formation of the active enzyme involves a self-maturation process in which the active site pyruvoyl group is generated from an internal serine residue via an autocatalytic post-translational modification. Two non-identical subunits are generated from the proenzyme in this reaction, and the pyruvate is formed at the N-terminus of the alpha chain, which is derived from the carboxyl end of the proenzyme. The post-translation cleavage follows an unusual pathway, termed non-hydrolytic serinolysis, in which the side chain hydroxyl group of the serine supplies its oxygen atom to form the C-terminus of the beta chain, while the remainder of the serine residue undergoes an oxidative deamination to produce ammonia and the pyruvoyl group blocking the N-terminus of the alpha chain.

The enzyme catalyses L-arginine + H(+) = agmatine + CO2. The protein operates within amine and polyamine biosynthesis; agmatine biosynthesis; agmatine from L-arginine: step 1/1. Functionally, specifically catalyzes the decarboxylation of L-arginine to agmatine. Has no S-adenosylmethionine decarboxylase (AdoMetDC) activity. This Pyrobaculum islandicum (strain DSM 4184 / JCM 9189 / GEO3) protein is Arginine decarboxylase proenzyme.